The primary structure comprises 469 residues: 3-isopropylmalate dehydratase large subunit (469 aa).

Positions 347, 408, and 411 each coordinate [4Fe-4S] cluster.

It belongs to the aconitase/IPM isomerase family. LeuC type 1 subfamily. Heterodimer of LeuC and LeuD. Requires [4Fe-4S] cluster as cofactor.

The catalysed reaction is (2R,3S)-3-isopropylmalate = (2S)-2-isopropylmalate. It participates in amino-acid biosynthesis; L-leucine biosynthesis; L-leucine from 3-methyl-2-oxobutanoate: step 2/4. Catalyzes the isomerization between 2-isopropylmalate and 3-isopropylmalate, via the formation of 2-isopropylmaleate. This is 3-isopropylmalate dehydratase large subunit from Haemophilus influenzae (strain PittEE).